The primary structure comprises 628 residues: Chaperone protein DnaK (628 aa).

Residue threonine 197 is modified to Phosphothreonine; by autocatalysis. Residues alanine 595–glycine 604 are compositionally biased toward basic and acidic residues. The tract at residues alanine 595–glutamate 628 is disordered.

This sequence belongs to the heat shock protein 70 family.

Acts as a chaperone. The protein is Chaperone protein DnaK of Aliarcobacter butzleri (strain RM4018) (Arcobacter butzleri).